Here is a 92-residue protein sequence, read N- to C-terminus: DNA-directed RNA polymerase subunit omega (92 aa).

This sequence belongs to the RNA polymerase subunit omega family. The RNAP catalytic core consists of 2 alpha, 1 beta, 1 beta' and 1 omega subunit. When a sigma factor is associated with the core the holoenzyme is formed, which can initiate transcription.

The catalysed reaction is RNA(n) + a ribonucleoside 5'-triphosphate = RNA(n+1) + diphosphate. In terms of biological role, promotes RNA polymerase assembly. Latches the N- and C-terminal regions of the beta' subunit thereby facilitating its interaction with the beta and alpha subunits. This is DNA-directed RNA polymerase subunit omega from Shewanella baltica (strain OS223).